The following is a 90-amino-acid chain: Spore coat protein F-like protein YgzC (90 aa).

This sequence belongs to the CotF family.

The protein localises to the spore coat. The protein is Spore coat protein F-like protein YgzC (ygzC) of Bacillus subtilis (strain 168).